The following is a 65-amino-acid chain: Large ribosomal subunit protein bL35 (65 aa).

The segment at Met-1–Ser-47 is disordered. Residues Ala-10–Arg-24 show a composition bias toward basic residues. The span at Ser-26 to Ser-35 shows a compositional bias: polar residues.

Belongs to the bacterial ribosomal protein bL35 family.

This chain is Large ribosomal subunit protein bL35, found in Geobacter metallireducens (strain ATCC 53774 / DSM 7210 / GS-15).